Consider the following 160-residue polypeptide: MSTLEGRGFTEEQEALVVKSWSAMKPNAGELGLKFFLKIFEIAPSAQKLFSFLKDSNVPLERNPKLKSHAMSVFLMTCESAVQLRKAGKVTVRESSLKKLGASHFKHGVADEHFEVTKFALLETIKEAVPETWSPEMKNAWGEAYDKLVAAIKLEMKPSS.

The region spanning 8–157 is the Globin domain; sequence GFTEEQEALV…LVAAIKLEMK (150 aa). The Homodimerization signature appears at 41-45; it reads EIAPS. Positions 51, 65, 69, 99, 103, and 104 each coordinate heme b. The Homodimerization signature appears at 111–123; sequence DEHFEVTKFALLE.

This sequence belongs to the plant globin family. Homodimer. Heme b serves as cofactor.

The protein resides in the cytoplasm. Its subcellular location is the nucleus. The catalysed reaction is Fe(III)-heme b-[protein] + nitric oxide + H2O = Fe(II)-heme b-[protein] + nitrite + 2 H(+). In terms of biological role, phytoglobin that reduces nitrite to nitric oxide (NO) under anoxic conditions (e.g. during flooding or in waterlogged soil) and upon root nodulation. Required for general plant development and during nodulation, especially for the onset of symbiosis. Monitors nitric oxide (NO) levels during early phase of the nitrogen-fixing symbiosis and buffers oxygen in functioning nodules. May not function as an oxygen storage or transport protein. Has an unusually high affinity for O(2) through a hexacoordinate heme iron because of a very low dissociation constant. This chain is Anaerobic nitrite reductase HBII, found in Casuarina glauca (Swamp oak).